The chain runs to 556 residues: Formate--tetrahydrofolate ligase (556 aa).

Position 65 to 72 (65 to 72 (TPAGEGKS)) interacts with ATP.

This sequence belongs to the formate--tetrahydrofolate ligase family.

It catalyses the reaction (6S)-5,6,7,8-tetrahydrofolate + formate + ATP = (6R)-10-formyltetrahydrofolate + ADP + phosphate. The protein operates within one-carbon metabolism; tetrahydrofolate interconversion. The chain is Formate--tetrahydrofolate ligase from Clostridium novyi (strain NT).